An 83-amino-acid polypeptide reads, in one-letter code: Putative beta-neurotoxin RjAa17f (83 aa).

The N-terminal stretch at 1-18 (MKILIFIIASFMLIGVEC) is a signal peptide. The LCN-type CS-alpha/beta domain occupies 19–82 (KEGYPMGRNG…VWDFSNIKCR (64 aa)). Intrachain disulfides connect Cys29/Cys81, Cys33/Cys55, Cys40/Cys62, and Cys44/Cys64.

It belongs to the long (4 C-C) scorpion toxin superfamily. Sodium channel inhibitor family. Beta subfamily. Expressed by the venom gland.

It localises to the secreted. In terms of biological role, beta toxins bind voltage-independently at site-4 of sodium channels (Nav) and shift the voltage of activation toward more negative potentials thereby affecting sodium channel activation and promoting spontaneous and repetitive firing. The sequence is that of Putative beta-neurotoxin RjAa17f from Rhopalurus junceus (Caribbean blue scorpion).